The sequence spans 450 residues: Malate:quinone oxidoreductase (450 aa).

This sequence belongs to the MQO family. It depends on FAD as a cofactor.

The protein resides in the cell membrane. It carries out the reaction (S)-malate + a quinone = a quinol + oxaloacetate. Its pathway is carbohydrate metabolism; tricarboxylic acid cycle; oxaloacetate from (S)-malate (quinone route): step 1/1. In terms of biological role, catalyzes oxidation of malate to oxaloacetate in the citric acid cycle. Donates electrons to quinones of the electron transfer chain. The polypeptide is Malate:quinone oxidoreductase (mqo) (Helicobacter pylori (strain ATCC 700392 / 26695) (Campylobacter pylori)).